A 483-amino-acid chain; its full sequence is Aspartyl/glutamyl-tRNA(Asn/Gln) amidotransferase subunit B (483 aa).

It belongs to the GatB/GatE family. GatB subfamily. In terms of assembly, heterotrimer of A, B and C subunits.

It catalyses the reaction L-glutamyl-tRNA(Gln) + L-glutamine + ATP + H2O = L-glutaminyl-tRNA(Gln) + L-glutamate + ADP + phosphate + H(+). The enzyme catalyses L-aspartyl-tRNA(Asn) + L-glutamine + ATP + H2O = L-asparaginyl-tRNA(Asn) + L-glutamate + ADP + phosphate + 2 H(+). Functionally, allows the formation of correctly charged Asn-tRNA(Asn) or Gln-tRNA(Gln) through the transamidation of misacylated Asp-tRNA(Asn) or Glu-tRNA(Gln) in organisms which lack either or both of asparaginyl-tRNA or glutaminyl-tRNA synthetases. The reaction takes place in the presence of glutamine and ATP through an activated phospho-Asp-tRNA(Asn) or phospho-Glu-tRNA(Gln). This is Aspartyl/glutamyl-tRNA(Asn/Gln) amidotransferase subunit B from Anaeromyxobacter sp. (strain Fw109-5).